The primary structure comprises 77 residues: RNA-binding protein Hfq (77 aa).

Residues 10-70 enclose the Sm domain; the sequence is DAFLNHVRKA…ISTIMPGQPI (61 aa).

The protein belongs to the Hfq family. In terms of assembly, homohexamer.

In terms of biological role, RNA chaperone that binds small regulatory RNA (sRNAs) and mRNAs to facilitate mRNA translational regulation in response to envelope stress, environmental stress and changes in metabolite concentrations. Also binds with high specificity to tRNAs. The polypeptide is RNA-binding protein Hfq (Cereibacter sphaeroides (strain ATCC 17029 / ATH 2.4.9) (Rhodobacter sphaeroides)).